The sequence spans 320 residues: Methionyl-tRNA formyltransferase (320 aa).

Residue 111 to 114 (SLLP) coordinates (6S)-5,6,7,8-tetrahydrofolate.

Belongs to the Fmt family.

The enzyme catalyses L-methionyl-tRNA(fMet) + (6R)-10-formyltetrahydrofolate = N-formyl-L-methionyl-tRNA(fMet) + (6S)-5,6,7,8-tetrahydrofolate + H(+). In terms of biological role, attaches a formyl group to the free amino group of methionyl-tRNA(fMet). The formyl group appears to play a dual role in the initiator identity of N-formylmethionyl-tRNA by promoting its recognition by IF2 and preventing the misappropriation of this tRNA by the elongation apparatus. The chain is Methionyl-tRNA formyltransferase from Pediococcus pentosaceus (strain ATCC 25745 / CCUG 21536 / LMG 10740 / 183-1w).